Reading from the N-terminus, the 59-residue chain is Large ribosomal subunit protein bL32 (59 aa).

Residues M1–R16 are compositionally biased toward basic residues. The tract at residues M1 to D20 is disordered.

This sequence belongs to the bacterial ribosomal protein bL32 family.

This chain is Large ribosomal subunit protein bL32, found in Erythrobacter litoralis (strain HTCC2594).